Here is a 189-residue protein sequence, read N- to C-terminus: Glycerol-3-phosphate acyltransferase (189 aa).

4 helical membrane-spanning segments follow: residues methionine 1–leucine 21, leucine 77–phenylalanine 97, methionine 111–phenylalanine 131, and leucine 151–valine 171.

This sequence belongs to the PlsY family. As to quaternary structure, probably interacts with PlsX.

It is found in the cell inner membrane. The catalysed reaction is an acyl phosphate + sn-glycerol 3-phosphate = a 1-acyl-sn-glycero-3-phosphate + phosphate. It participates in lipid metabolism; phospholipid metabolism. Its function is as follows. Catalyzes the transfer of an acyl group from acyl-phosphate (acyl-PO(4)) to glycerol-3-phosphate (G3P) to form lysophosphatidic acid (LPA). This enzyme utilizes acyl-phosphate as fatty acyl donor, but not acyl-CoA or acyl-ACP. The sequence is that of Glycerol-3-phosphate acyltransferase from Pseudomonas putida (strain W619).